The following is a 371-amino-acid chain: MSLENKNIIITAGGTGGHIYPALAIAELLRQNKANVTWVGTPNSMEASIVPEYFNIQFIKSSGVRRKGIIKKITFPLKLAYNTLKSRSLLKKLKANLVIGFGGYVSGPICLAAAQINIPVIIHEQNAKIGLTNRILAKFATTICLAFEIENLHKQFSSKQLAKTKIVGNPVRKDIVALNDKARIYTDSSTLKILVLGGSQGAKAINEIIPKLIQKSNEQGINIKVWHQTGKLSLEETKDAYKDISQNHIKDIAAFIDDMAIAYNWADLVICRAGALTVSECAIAGLPAIFIPLPSAVDDHQFFNAQNIVNNNAGFCLRQQQMTLENLLAIIKPLNQDRSKLEQMSKMAKKTLIKNSSEQILDCVKKILNNK.

Residues 15–17 (TGG), asparagine 126, arginine 172, serine 199, isoleucine 256, 275–280 (ALTVSE), and glutamine 301 contribute to the UDP-N-acetyl-alpha-D-glucosamine site.

It belongs to the glycosyltransferase 28 family. MurG subfamily.

It is found in the cell inner membrane. The catalysed reaction is di-trans,octa-cis-undecaprenyl diphospho-N-acetyl-alpha-D-muramoyl-L-alanyl-D-glutamyl-meso-2,6-diaminopimeloyl-D-alanyl-D-alanine + UDP-N-acetyl-alpha-D-glucosamine = di-trans,octa-cis-undecaprenyl diphospho-[N-acetyl-alpha-D-glucosaminyl-(1-&gt;4)]-N-acetyl-alpha-D-muramoyl-L-alanyl-D-glutamyl-meso-2,6-diaminopimeloyl-D-alanyl-D-alanine + UDP + H(+). The protein operates within cell wall biogenesis; peptidoglycan biosynthesis. Functionally, cell wall formation. Catalyzes the transfer of a GlcNAc subunit on undecaprenyl-pyrophosphoryl-MurNAc-pentapeptide (lipid intermediate I) to form undecaprenyl-pyrophosphoryl-MurNAc-(pentapeptide)GlcNAc (lipid intermediate II). This is UDP-N-acetylglucosamine--N-acetylmuramyl-(pentapeptide) pyrophosphoryl-undecaprenol N-acetylglucosamine transferase from Francisella tularensis subsp. holarctica (strain FTNF002-00 / FTA).